The primary structure comprises 321 residues: MNRPERLQPGVKLRDAEKVSRIPVKIVPSERETMLRKPDWLRVKLPASNQRILDIKQALRANGLHSVCEEASCPNLAECFNHGTATFMILGAICTRRCPFCDVAHGRPLKPDEQEPVKLAQTIRDMKLKYVVITSVDRDDLRDGGAQHFADCIREIRKLNPEIKIEILVPDFRGRIDAALDILSTEPPDVFNHNLETAPMHYRKARPGANYQWSLDLLKRFKERHPNVPTKSGLMMGLGETNDEIAQVLRDLREHKVEMLTLGQYLQPSKFHLPVERYVSPAEFDELKALADELGFTHAACGPLVRSSYHADLQAQGKEVK.

The [4Fe-4S] cluster site is built by Cys-68, Cys-73, Cys-79, Cys-94, Cys-98, Cys-101, and Ser-308. One can recognise a Radical SAM core domain in the interval 80 to 297 (FNHGTATFMI…KALADELGFT (218 aa)).

This sequence belongs to the radical SAM superfamily. Lipoyl synthase family. The cofactor is [4Fe-4S] cluster.

It localises to the cytoplasm. It carries out the reaction [[Fe-S] cluster scaffold protein carrying a second [4Fe-4S](2+) cluster] + N(6)-octanoyl-L-lysyl-[protein] + 2 oxidized [2Fe-2S]-[ferredoxin] + 2 S-adenosyl-L-methionine + 4 H(+) = [[Fe-S] cluster scaffold protein] + N(6)-[(R)-dihydrolipoyl]-L-lysyl-[protein] + 4 Fe(3+) + 2 hydrogen sulfide + 2 5'-deoxyadenosine + 2 L-methionine + 2 reduced [2Fe-2S]-[ferredoxin]. It participates in protein modification; protein lipoylation via endogenous pathway; protein N(6)-(lipoyl)lysine from octanoyl-[acyl-carrier-protein]: step 2/2. Functionally, catalyzes the radical-mediated insertion of two sulfur atoms into the C-6 and C-8 positions of the octanoyl moiety bound to the lipoyl domains of lipoate-dependent enzymes, thereby converting the octanoylated domains into lipoylated derivatives. This chain is Lipoyl synthase, found in Shewanella oneidensis (strain ATCC 700550 / JCM 31522 / CIP 106686 / LMG 19005 / NCIMB 14063 / MR-1).